The chain runs to 207 residues: Superoxide dismutase [Mn] (207 aa).

His28, His76, Asp160, and His164 together coordinate Mn(2+).

It belongs to the iron/manganese superoxide dismutase family. It depends on Mn(2+) as a cofactor.

It carries out the reaction 2 superoxide + 2 H(+) = H2O2 + O2. Destroys superoxide anion radicals which are normally produced within the cells and which are toxic to biological systems. This chain is Superoxide dismutase [Mn] (sodA), found in Mycobacterium intracellulare (strain ATCC 13950 / DSM 43223 / JCM 6384 / NCTC 13025 / 3600).